A 459-amino-acid polypeptide reads, in one-letter code: Flavin-containing monooxygenase FMO GS-OX1 (459 aa).

17–22 (GAGAAG) is an FAD binding site. Position 211 to 216 (211 to 216 (GNYASG)) interacts with NADP(+).

This sequence belongs to the FMO family. The cofactor is FAD. In terms of tissue distribution, mainly expressed in leaves. Low levels in flowers and seeds.

It catalyses the reaction a (Z)-omega-(methylsulfanyl)-N-sulfo-alkylhydroximate S-glucoside + NADPH + O2 + H(+) = a (Z)-omega-(methylsulfinyl)-alkyl-glucosinolate + NADP(+) + H2O. Catalyzes the conversion of methylthioalkyl glucosinolates into methylsulfinylalkyl glucosinolates. Able to S-oxygenate both desulfo- and intact 4-methylthiobutyl glucosinolates, but no activity with methionine, dihomomethionine or 5-methylthiopentaldoxime. This Arabidopsis thaliana (Mouse-ear cress) protein is Flavin-containing monooxygenase FMO GS-OX1 (FMOGS-OX1).